A 177-amino-acid polypeptide reads, in one-letter code: Large ribosomal subunit protein uL6 (177 aa).

Belongs to the universal ribosomal protein uL6 family. As to quaternary structure, part of the 50S ribosomal subunit.

Functionally, this protein binds to the 23S rRNA, and is important in its secondary structure. It is located near the subunit interface in the base of the L7/L12 stalk, and near the tRNA binding site of the peptidyltransferase center. The sequence is that of Large ribosomal subunit protein uL6 from Ralstonia pickettii (strain 12J).